A 1400-amino-acid polypeptide reads, in one-letter code: DNA-directed RNA polymerase subunit beta' (1400 aa).

Positions 71, 73, 86, and 89 each coordinate Zn(2+). 3 residues coordinate Mg(2+): D462, D464, and D466. Residues C811, C885, C892, and C895 each coordinate Zn(2+).

Belongs to the RNA polymerase beta' chain family. In terms of assembly, the RNAP catalytic core consists of 2 alpha, 1 beta, 1 beta' and 1 omega subunit. When a sigma factor is associated with the core the holoenzyme is formed, which can initiate transcription. Requires Mg(2+) as cofactor. The cofactor is Zn(2+).

The enzyme catalyses RNA(n) + a ribonucleoside 5'-triphosphate = RNA(n+1) + diphosphate. In terms of biological role, DNA-dependent RNA polymerase catalyzes the transcription of DNA into RNA using the four ribonucleoside triphosphates as substrates. In Brucella abortus (strain S19), this protein is DNA-directed RNA polymerase subunit beta'.